We begin with the raw amino-acid sequence, 38 residues long: Beta-galactosidase (38 aa).

The protein belongs to the glycosyl hydrolase 35 family. Heterodimer of a large and a small subunit. Post-translationally, the small subunit is N-glycosylated.

The catalysed reaction is Hydrolysis of terminal non-reducing beta-D-galactose residues in beta-D-galactosides.. Its function is as follows. Involved in cell wall degradation. Degrades polysaccharides containing beta-(1--&gt;4)-linked galactans, acting as an exo-(1--&gt;4)-beta-D-galactanase. The protein is Beta-galactosidase of Hordeum vulgare (Barley).